We begin with the raw amino-acid sequence, 693 residues long: MDYNKLRNIGISAHIDSGKTTLTERILFYCNKIHAIHEVKGKDGVGATMDSMELERERGITIASAATHVEWKDFPINIIDTPGHVDFTIEVERSLRVLDGAILVLDSVAGVQSQSITVDRQLKRYSVPRLAFVNKCDKTGANPYNVKDQLRSKLDLNSVLMQIPIGLEDKHIGVIDLVLMKAYYFEGKDGTEIIEKEIPSELLEEAKNKREMMLDALADFNDELMELHMEGKEVPIEIIYNAIRTGTLALKLCPVFMGSAYKNKGVQLLLDAVTRFLPSPHDIKNTALDLNNNEKEIDLKIDNNLPTVALAFKLEDGQYGQLTYVRIYQGTLKKGQELINSRTSKKFKVGRLIRMHANNTEDIEFGGSGDIVALFGIECASGDTFCDPSINYSMTSMFIPDPVISLSVKPKDKKSADNMAKALGRFTKEDPTFKTYVDIESNETIIQGMGELHLGVYIERMKREFKAEVETGMPQVAYRETITGKAEFNYTHKKQSGGAGQFGRVAGFMEPLNKEGETYEFVNLIKGGVIPTEYIPSCDKGFQKAMEKGTLIGFPIVDIKITINDGQYHIVDSSDIAFQLAAIGAFREAYEKAKPTILEPIMKVTLEGPTEFQGNMFGLLNQRRGIITGSLEDGSFSKVEAEVPLSEMFGFSTVLRSSTQGKAEFSMEFLKYGKVPSAIFDELRKKFNDQNKS.

The tr-type G domain occupies 4–281 (NKLRNIGISA…AVTRFLPSPH (278 aa)). Residues 13 to 20 (AHIDSGKT), 80 to 84 (DTPGH), and 134 to 137 (NKCD) each bind GTP.

This sequence belongs to the TRAFAC class translation factor GTPase superfamily. Classic translation factor GTPase family. EF-G/EF-2 subfamily.

The protein resides in the cytoplasm. Functionally, catalyzes the GTP-dependent ribosomal translocation step during translation elongation. During this step, the ribosome changes from the pre-translocational (PRE) to the post-translocational (POST) state as the newly formed A-site-bound peptidyl-tRNA and P-site-bound deacylated tRNA move to the P and E sites, respectively. Catalyzes the coordinated movement of the two tRNA molecules, the mRNA and conformational changes in the ribosome. The polypeptide is Elongation factor G 1 (Borreliella afzelii (strain PKo) (Borrelia afzelii)).